The following is a 229-amino-acid chain: Small ribosomal subunit protein uS3 (229 aa).

The 69-residue stretch at 17–85 (VKEWIKDEVR…NPQVSVDEVE (69 aa)) folds into the KH type-2 domain. Residues 202–229 (LRGESGEDEGDKGDEQGGEAQEAEGAGA) are disordered. Low complexity predominate over residues 219 to 229 (GEAQEAEGAGA).

Belongs to the universal ribosomal protein uS3 family. In terms of assembly, part of the 30S ribosomal subunit.

Functionally, binds the lower part of the 30S subunit head. The polypeptide is Small ribosomal subunit protein uS3 (Archaeoglobus fulgidus (strain ATCC 49558 / DSM 4304 / JCM 9628 / NBRC 100126 / VC-16)).